Reading from the N-terminus, the 229-residue chain is Growth factor receptor-bound protein 2 (229 aa).

2 consecutive SH3 domains span residues 1–58 (MEAV…MKPH) and 168–227 (QQPT…PVNR). Residues 60-171 (WFFGKIPRAK…RATNLLQQPT (112 aa)) enclose the SH2 domain.

It localises to the nucleus. It is found in the cytoplasm. Its subcellular location is the endosome. The protein resides in the golgi apparatus. Its function is as follows. Adapter protein that provides a critical link between cell surface growth factor receptors and the Ras signaling pathway. Promotes meiotic reinitiation during oocyte maturation. In Xenopus tropicalis (Western clawed frog), this protein is Growth factor receptor-bound protein 2.